The sequence spans 145 residues: Putative pre-16S rRNA nuclease (145 aa).

It belongs to the YqgF nuclease family.

It is found in the cytoplasm. Could be a nuclease involved in processing of the 5'-end of pre-16S rRNA. The polypeptide is Putative pre-16S rRNA nuclease (Pseudomonas fluorescens).